A 287-amino-acid polypeptide reads, in one-letter code: Eukaryotic translation initiation factor 3 subunit F (287 aa).

The 131-residue stretch at 12–142 (VRVHPVVLFQ…IKAYVCVSLG (131 aa)) folds into the MPN domain.

The protein belongs to the eIF-3 subunit F family. In terms of assembly, component of the eukaryotic translation initiation factor 3 (eIF-3) complex.

The protein localises to the cytoplasm. Its function is as follows. Component of the eukaryotic translation initiation factor 3 (eIF-3) complex, which is involved in protein synthesis of a specialized repertoire of mRNAs and, together with other initiation factors, stimulates binding of mRNA and methionyl-tRNAi to the 40S ribosome. The eIF-3 complex specifically targets and initiates translation of a subset of mRNAs involved in cell proliferation. The protein is Eukaryotic translation initiation factor 3 subunit F of Aedes aegypti (Yellowfever mosquito).